The sequence spans 1010 residues: Phosphoenolpyruvate carboxylase (1010 aa).

Over residues 1-18 the composition is skewed to polar residues; sequence MIMRSPETSGASMPQSTA. Disordered stretches follow at residues 1 to 36 and 132 to 154; these read MIMR…PGAG and LRPS…PPLA. Catalysis depends on residues H195 and K652. Residues 967–986 form a disordered region; that stretch reads QNRQPPMSESPGTPEDRRTY.

It belongs to the PEPCase type 1 family. It depends on Mg(2+) as a cofactor.

It catalyses the reaction oxaloacetate + phosphate = phosphoenolpyruvate + hydrogencarbonate. Forms oxaloacetate, a four-carbon dicarboxylic acid source for the tricarboxylic acid cycle. In Parasynechococcus marenigrum (strain WH8102), this protein is Phosphoenolpyruvate carboxylase.